Reading from the N-terminus, the 620-residue chain is UDP-glucose:protein N-beta-glucosyltransferase (620 aa).

Belongs to the glycosyltransferase 41 family.

The protein resides in the cytoplasm. The enzyme catalyses L-asparaginyl-[protein] + UDP-alpha-D-glucose = N(4)-(beta-D-glucosyl)-L-asparaginyl-[protein] + UDP + H(+). Its pathway is protein modification; protein glycosylation. Inverting glycosyltransferase that catalyzes the transfer of one glucose moiety from UDP-glucose to an asparagine residue in peptides and proteins containing the NX(S/T) motif, resulting in their modification with a beta-linked 1,N-glucose. Likely acts as a key component of a general protein glycosylation system. This is UDP-glucose:protein N-beta-glucosyltransferase from Actinobacillus pleuropneumoniae serotype 5b (strain L20).